The following is a 102-amino-acid chain: RNA-binding protein Hfq (102 aa).

Residues 9–68 (DPFLNALRRERVPVSIYLVNGIKLQGQIESFDQFVILLKNTVSQMVYKHAISTVVPSRPV) enclose the Sm domain. A disordered region spans residues 63–102 (VPSRPVSHHSNNAGGGASNNYHHGSNAQGSTAQQDSEETE). Low complexity predominate over residues 70 to 88 (HHSNNAGGGASNNYHHGSN).

This sequence belongs to the Hfq family. In terms of assembly, homohexamer.

RNA chaperone that binds small regulatory RNA (sRNAs) and mRNAs to facilitate mRNA translational regulation in response to envelope stress, environmental stress and changes in metabolite concentrations. Also binds with high specificity to tRNAs. This Salmonella agona (strain SL483) protein is RNA-binding protein Hfq.